The primary structure comprises 140 residues: Large ribosomal subunit protein uL16 (140 aa).

Belongs to the universal ribosomal protein uL16 family. As to quaternary structure, part of the 50S ribosomal subunit.

Its function is as follows. Binds 23S rRNA and is also seen to make contacts with the A and possibly P site tRNAs. This is Large ribosomal subunit protein uL16 from Malacoplasma penetrans (strain HF-2) (Mycoplasma penetrans).